Consider the following 867-residue polypeptide: GATOR2 complex protein Mio (867 aa).

WD repeat units follow at residues 51-86 (ANES…GICN), 100-144 (RQQR…PKET), 149-188 (GVGE…ATCQ), 190-228 (IQTK…SPLR), and 231-272 (QSSK…TDNS). Low complexity predominate over residues 350 to 376 (PASPTSTAATPTQQQPTSSCSTNSGSS). The disordered stretch occupies residues 350–378 (PASPTSTAATPTQQQPTSSCSTNSGSSLD). The C4-type zinc finger occupies 739–777 (LSCNFCGKSVSNALLDEPRPRSTTTSTNRLSSCPSCRKP). Cys741, Cys744, Cys771, Cys774, Cys784, Cys821, Cys824, His826, His829, His832, Cys843, Cys848, and Cys852 together coordinate Zn(2+). The RING-type; atypical zinc finger occupies 778 to 857 (LPRCSLCLMH…CNCRCFDMDG (80 aa)).

Belongs to the WD repeat mio family. Component of the GATOR complex consisting of mio, Nup44A/Seh1, Im11, Nplr3, Nplr2, Wdr24, Wdr59 and Sec13. Within the GATOR complex, probable component of the GATOR2 subcomplex which is likely composed of mio, Nup44A/Seh1, Wdr24, Wdr59 and Sec13. Interacts with Wdr24. Interacts with nucleoporin Nup44A/Seh1. The GATOR2 complex associates with unmet in the absence of S-adenosyl-L-methionine; the mio-Wdr24-Nup44A subcomplex is essential and sufficient for this interaction while Wdr59 and Sec13 are dispensable. This association acts as a nutrient sensor to inhibit mTORC1 signaling in the absence of methionine. As to expression, present in the oocyte.

It is found in the nucleus. Its subcellular location is the lysosome. An essential component of the GATOR subcomplex GATOR2 which functions as an activator of the amino acid-sensing branch of the mTORC1 signaling pathway. The two GATOR subcomplexes, GATOR1 and GATOR2, regulate the mTORC1 pathway in order to mediate metabolic homeostasis, female gametogenesis and the response to amino acid limitation and complete starvation. GATOR2 activates the mTORC1 signaling pathway through the inhibition of the GATOR1 subcomplex, controlling the switch to cell proliferation and growth under nutrient replete conditions and during female oocyte development. This component is required for activating mTORC1 specifically in germline cells to promote cell growth and maintain the oocyte fate. GATOR1 and GATOR2 act at different stages of oogenesis to regulate mTORC1 in order to control meiotic entry and promote oocyte growth and development. After exactly four mitotic cyst divisions, the GATOR1 complex members (Iml1, Nprl2 and Nprl3) down-regulate mTORC1 to slow cellular metabolism and promote the mitotic/meiotic transition. At later stages of oogenesis, the mio and Nup44A components of the GATOR2 complex inhibit GATOR1 and thus activate mTORC1 to promote meiotic progression, and drive oocyte growth and development. In addition to its role in the regulation of the mTORC1 complex, functions independently of mTORC1 to prevent the inappropriate accumulation of autolysosomes in germline tissues. The chain is GATOR2 complex protein Mio from Drosophila melanogaster (Fruit fly).